The chain runs to 49 residues: Large ribosomal subunit protein bL33B (49 aa).

The protein belongs to the bacterial ribosomal protein bL33 family.

The chain is Large ribosomal subunit protein bL33B from Lactobacillus delbrueckii subsp. bulgaricus (strain ATCC BAA-365 / Lb-18).